Here is a 427-residue protein sequence, read N- to C-terminus: MRALSANLFAVLLMCALASVFYVWSALENRLERHKRGSSVPDGGSFHQGPSEDHSAKTFRALLAVPVAQRQNSAGRSKAQNLTNPSAFVGSRDYHVNGDDERSAQREGPVKLGYPVDDGIFWSNWLEDVLPVRFTEGYAEAWRSKARTSPVVKLEPGCGRISNQLATFADGTKACVRYGINADQVQGETLTYYLASLLGITNLPPLVLSQLNGDSAQWVAVRTRINNLQWSDRAVVSLTEWISNLTGVVTPAPLRQESSGLLPALRCFENKTTAELLELMQWSDLIVFDYLTANFDRLVSNLFSLQWDPHVMERDTNNLLKTPHGDLVFIDNEAGLVHGFRVLNMWEKYHHSVLSSVCVFRKRTMQRVAELHRRRDSRQRLLELYRDSEPLSQELGFLSDEHAAVLQDRIDQLYKHIMQCKEKYNQL.

The first 18 residues, 1–18 (MRALSANLFAVLLMCALA), serve as a signal peptide directing secretion. 3 N-linked (GlcNAc...) asparagine glycosylation sites follow: Asn81, Asn244, and Asn270.

It localises to the secreted. In terms of biological role, may act as an inhibitor of dendrite extension and branching. The polypeptide is Four-jointed box protein 1 (fjx1) (Xiphophorus maculatus (Southern platyfish)).